A 157-amino-acid chain; its full sequence is Ribosomal RNA large subunit methyltransferase H (157 aa).

S-adenosyl-L-methionine contacts are provided by residues L73, G105, and 124–129; that span reads LSRMTF.

Belongs to the RNA methyltransferase RlmH family. In terms of assembly, homodimer.

The protein localises to the cytoplasm. It catalyses the reaction pseudouridine(1915) in 23S rRNA + S-adenosyl-L-methionine = N(3)-methylpseudouridine(1915) in 23S rRNA + S-adenosyl-L-homocysteine + H(+). Functionally, specifically methylates the pseudouridine at position 1915 (m3Psi1915) in 23S rRNA. The chain is Ribosomal RNA large subunit methyltransferase H from Porphyromonas gingivalis (strain ATCC 33277 / DSM 20709 / CIP 103683 / JCM 12257 / NCTC 11834 / 2561).